An 810-amino-acid polypeptide reads, in one-letter code: Janus kinase and microtubule-interacting protein 2 (810 aa).

Coiled coils occupy residues 13–102 (EALI…EMSR), 148–178 (ERLKLLQEIADLKTAKKQVDEALSNMIQADK), and 207–244 (RRLMDEIKAKDRIIFSLEKELETQTGYVQKLQLQKEAL). Over residues 261–274 (PKREIPGRAGDGSE) the composition is skewed to basic and acidic residues. 2 disordered regions span residues 261-280 (PKREIPGRAGDGSEHCSSPD) and 437-465 (YDEDSMDSETSSMASFRTDRTPATPDDDL). Positions 280–419 (DLRRNQKRIA…REKLIRRRKH (140 aa)) form a coiled coil. 2 coiled-coil regions span residues 468–597 (SLAA…RERR) and 664–808 (EKWI…SNRK).

The protein belongs to the JAKMIP family. As to expression, highly expressed in brain, moderately expressed in thymus, spleen and lung, and weakly expressed in kidney, liver and peripheral blood lymphocytes. Also expressed in adrenal and pituitary glands, as well as testis.

It localises to the golgi apparatus. This is Janus kinase and microtubule-interacting protein 2 (JAKMIP2) from Homo sapiens (Human).